We begin with the raw amino-acid sequence, 226 residues long: CASP-like protein 2BC1 (226 aa).

Topologically, residues 1-37 (MRKHIDIVFSRLSGPILNPPPDNNVIPKTDRKLRITE) are cytoplasmic. The helical transmembrane segment at 38-58 (VILRFAVVIFALVSAIMVGTA) threads the bilayer. Residues 59–78 (SGTRDLGGGIRIHAHFTLLK) lie on the Extracellular side of the membrane. A helical membrane pass occupies residues 79 to 99 (TLPFLVIVDGILAVYSLLQGL). Over 100–114 (RCFLSLYMRHILLNK) the chain is Cytoplasmic. A helical transmembrane segment spans residues 115-135 (ALAWTIFCCDQALAYVIFAAA). Topologically, residues 136 to 170 (ASTAETAYISEQGLDELQWIKVCMFFRAYCFKSGA) are extracellular. A helical membrane pass occupies residues 171–191 (GMINAFLAALCMVFVSGMSVF). Residues 192–226 (HLFRLYGEKRAYGHIAEQVVISEEAAERRNSLNGI) are Cytoplasmic-facing.

This sequence belongs to the Casparian strip membrane proteins (CASP) family. As to quaternary structure, homodimer and heterodimers.

It is found in the cell membrane. The protein is CASP-like protein 2BC1 of Picea sitchensis (Sitka spruce).